A 465-amino-acid polypeptide reads, in one-letter code: NADH-quinone oxidoreductase subunit N (465 aa).

13 helical membrane passes run 9-29 (FNFVLLFPVLSLLFWAIVLLL), 44-64 (ASIIALFSTLCFLLIYNGFVL), 73-93 (LFVSDNYAIFAQIVILVFSML), 110-130 (FLFMIASLILMISSTNLIVIF), 159-179 (YFTLAAVGAGFFVFACAFVYL), 198-218 (PILLCAGVMFLVIVGVKLSIA), 235-255 (FIAFISIVPKIAMIIVVLRIF), 265-285 (EYIVALLAIFSMLAVSIVALI), 292-312 (MLAYSSITHSSFILAVIVSSM), 327-347 (IFALFVYWISFAFANYGIFLI), 371-391 (IMLAIFILCIAGIPPFGIFWG), 405-427 (YALVFAVALSSMIMLYAYLKILI), and 444-464 (VKQKIILCLCLIGSVSCVFLL).

The protein belongs to the complex I subunit 2 family. NDH-1 is composed of 14 different subunits. Subunits NuoA, H, J, K, L, M, N constitute the membrane sector of the complex.

The protein localises to the cell inner membrane. The catalysed reaction is a quinone + NADH + 5 H(+)(in) = a quinol + NAD(+) + 4 H(+)(out). Functionally, NDH-1 shuttles electrons from NADH, via FMN and iron-sulfur (Fe-S) centers, to quinones in the respiratory chain. The immediate electron acceptor for the enzyme in this species is believed to be ubiquinone. Couples the redox reaction to proton translocation (for every two electrons transferred, four hydrogen ions are translocated across the cytoplasmic membrane), and thus conserves the redox energy in a proton gradient. In Campylobacter lari (strain RM2100 / D67 / ATCC BAA-1060), this protein is NADH-quinone oxidoreductase subunit N.